The sequence spans 265 residues: Polyprenol monophosphomannose synthase (265 aa).

The segment covering 1-10 (MSVPGEREQG) has biased composition (basic and acidic residues). Positions 1 to 21 (MSVPGEREQGAGEDPATVRPT) are disordered.

The protein belongs to the glycosyltransferase 2 family. In terms of assembly, interacts with Lnt (also called Ppm2, AC A0QZ13) upon coexpression in E.coli, which increases the PPM synthase activity of this protein.

Its subcellular location is the cytoplasm. It catalyses the reaction a di-trans,poly-cis-dolichyl phosphate + GDP-alpha-D-mannose = a di-trans,poly-cis-dolichyl beta-D-mannosyl phosphate + GDP. In terms of biological role, transfers mannose from GDP-mannose to lipid acceptors to form polyprenol monophosphomannose (PPM); catalytic activity in vitro is enhanced by Lnt (AC A0QZ13). PMM is an alkai-stable sugar donor which adds mannose-phosphate residues to triacylated-PIM2, eventually leading to generation of the cell wall glycolipid lipoglycan modulins lipoarabinomannan (LAM) and lipomannan (LM). The polypeptide is Polyprenol monophosphomannose synthase (Mycolicibacterium smegmatis (strain ATCC 700084 / mc(2)155) (Mycobacterium smegmatis)).